Reading from the N-terminus, the 325-residue chain is 4-hydroxy-3-methylbut-2-enyl diphosphate reductase (325 aa).

C13 lines the [4Fe-4S] cluster pocket. Residues H42 and H76 each contribute to the (2E)-4-hydroxy-3-methylbut-2-enyl diphosphate site. Positions 42 and 76 each coordinate dimethylallyl diphosphate. Residues H42 and H76 each contribute to the isopentenyl diphosphate site. Position 98 (C98) interacts with [4Fe-4S] cluster. Residue H126 participates in (2E)-4-hydroxy-3-methylbut-2-enyl diphosphate binding. H126 provides a ligand contact to dimethylallyl diphosphate. H126 is an isopentenyl diphosphate binding site. Catalysis depends on E128, which acts as the Proton donor. Residue T169 coordinates (2E)-4-hydroxy-3-methylbut-2-enyl diphosphate. C230 is a [4Fe-4S] cluster binding site. S258, S259, N260, and S306 together coordinate (2E)-4-hydroxy-3-methylbut-2-enyl diphosphate. Dimethylallyl diphosphate-binding residues include S258, S259, N260, and S306. Isopentenyl diphosphate is bound by residues S258, S259, N260, and S306.

This sequence belongs to the IspH family. [4Fe-4S] cluster is required as a cofactor.

It catalyses the reaction isopentenyl diphosphate + 2 oxidized [2Fe-2S]-[ferredoxin] + H2O = (2E)-4-hydroxy-3-methylbut-2-enyl diphosphate + 2 reduced [2Fe-2S]-[ferredoxin] + 2 H(+). The catalysed reaction is dimethylallyl diphosphate + 2 oxidized [2Fe-2S]-[ferredoxin] + H2O = (2E)-4-hydroxy-3-methylbut-2-enyl diphosphate + 2 reduced [2Fe-2S]-[ferredoxin] + 2 H(+). Its pathway is isoprenoid biosynthesis; dimethylallyl diphosphate biosynthesis; dimethylallyl diphosphate from (2E)-4-hydroxy-3-methylbutenyl diphosphate: step 1/1. It functions in the pathway isoprenoid biosynthesis; isopentenyl diphosphate biosynthesis via DXP pathway; isopentenyl diphosphate from 1-deoxy-D-xylulose 5-phosphate: step 6/6. Functionally, catalyzes the conversion of 1-hydroxy-2-methyl-2-(E)-butenyl 4-diphosphate (HMBPP) into a mixture of isopentenyl diphosphate (IPP) and dimethylallyl diphosphate (DMAPP). Acts in the terminal step of the DOXP/MEP pathway for isoprenoid precursor biosynthesis. This is 4-hydroxy-3-methylbut-2-enyl diphosphate reductase from Chlorobium phaeobacteroides (strain BS1).